Here is a 548-residue protein sequence, read N- to C-terminus: Membrane protein insertase YidC (548 aa).

Residues 6–26 traverse the membrane as a helical segment; sequence NLLVIALLFVSFMIWQAWEQD. Positions 28–55 are disordered; the sequence is NPQPQAQQTTQTTTTAAGSAADQGVPAS. Over residues 30-50 the composition is skewed to low complexity; sequence QPQAQQTTQTTTTAAGSAADQ. 4 helical membrane-spanning segments follow: residues 350 to 370, 420 to 440, 458 to 478, and 499 to 519; these read FVGN…GIMY, LGGC…YYML, LSAQ…MFFI, and PVIF…YYIV.

It belongs to the OXA1/ALB3/YidC family. Type 1 subfamily. As to quaternary structure, interacts with the Sec translocase complex via SecD. Specifically interacts with transmembrane segments of nascent integral membrane proteins during membrane integration.

It localises to the cell inner membrane. Required for the insertion and/or proper folding and/or complex formation of integral membrane proteins into the membrane. Involved in integration of membrane proteins that insert both dependently and independently of the Sec translocase complex, as well as at least some lipoproteins. Aids folding of multispanning membrane proteins. In Escherichia fergusonii (strain ATCC 35469 / DSM 13698 / CCUG 18766 / IAM 14443 / JCM 21226 / LMG 7866 / NBRC 102419 / NCTC 12128 / CDC 0568-73), this protein is Membrane protein insertase YidC.